A 213-amino-acid chain; its full sequence is uncharacterized protein (213 aa).

Residues Gly-53, Glu-74, and Asp-97 each coordinate S-adenosyl-L-methionine.

It belongs to the methyltransferase superfamily. YrrT family.

Could be a S-adenosyl-L-methionine-dependent methyltransferase. This is an uncharacterized protein from Bacillus subtilis (strain 168).